The primary structure comprises 120 residues: SPbeta prophage-derived DSR anti-defense 1 (120 aa).

The protein belongs to the DSR anti-defense 1 family. In terms of assembly, interacts with Bacillus subtilis DSR2 (via C-terminus) in a 2:4 ratio; this interaction leads to the absence of activation of the NADase defense activity of DSR2.

Counteracts the defense-associated sirtuin 2 (DSR2) defense system of the host. Inhibits the NADase activity of host DSR2 by competing with the tail tube protein that normally activates DSR2. This is SPbeta prophage-derived DSR anti-defense 1 (yotI) from Bacillus subtilis (strain 168).